We begin with the raw amino-acid sequence, 261 residues long: Calbindin (261 aa).

At Ala-2 the chain carries N-acetylalanine. The interaction with RANBP9 stretch occupies residues 2 to 7 (AESHLQ). 5 consecutive EF-hand domains span residues 11-46 (ITASQFFEIWLHFDADGSGYLEGKELQNLIQELLQA), 53-88 (ELSPEMKSFVDQYGQRDDGKIGIVELAHVLPTEENF), 98-133 (KSCEEFMKTWRKYDTDHSGFIETEELKNFLKDLLEK), 142-177 (KLAEYTDLMLKLFDSNNDGKLELTEMARLLPVQENF), and 186-221 (MCGKEFNKAFELYDQDGNGYIDENELDALLKDLCEK). Ca(2+)-binding residues include Asp-24, Asp-26, Ser-28, Tyr-30, and Glu-35. Residues Asp-111, Asp-113, Ser-115, Glu-122, Asp-155, Asn-157, Asp-159, Lys-161, Glu-166, Asp-199, Asp-201, Asn-203, Tyr-205, and Glu-210 each contribute to the Ca(2+) site.

Belongs to the calbindin family. As to quaternary structure, interacts with RANBP9. Expressed in the modiolar nerve root and in bushy neurons in the ventral cochlear nucleus (at protein level).

In terms of biological role, buffers cytosolic calcium. May stimulate a membrane Ca(2+)-ATPase and a 3',5'-cyclic nucleotide phosphodiesterase. The sequence is that of Calbindin (Calb1) from Mus musculus (Mouse).